The chain runs to 307 residues: Membrane protein insertase YidC 2 (307 aa).

An N-terminal signal peptide occupies residues Met1 to Gly23. Cys24 carries N-palmitoyl cysteine lipidation. A lipid anchor (S-diacylglycerol cysteine) is attached at Cys24. 5 helical membrane passes run Leu58–Leu78, Leu135–Phe155, Val179–Val199, Thr209–Leu225, and Leu231–Leu251. The tract at residues Tyr263 to Arg307 is disordered. Positions Tyr271–Gln288 are enriched in polar residues. A compositionally biased stretch (basic residues) spans Lys293–Arg307.

The protein belongs to the OXA1/ALB3/YidC family. Type 2 subfamily.

It is found in the cell membrane. Its function is as follows. Required for the insertion and/or proper folding and/or complex formation of integral membrane proteins into the membrane. Involved in integration of membrane proteins that insert both dependently and independently of the Sec translocase complex, as well as at least some lipoproteins. This Streptococcus pyogenes serotype M18 (strain MGAS8232) protein is Membrane protein insertase YidC 2.